The sequence spans 392 residues: Formate-dependent phosphoribosylglycinamide formyltransferase (392 aa).

N(1)-(5-phospho-beta-D-ribosyl)glycinamide is bound by residues 20 to 21 (EL) and E80. Residues R112, K153, 158-163 (SSGKGQ), 193-196 (EGFV), and E201 contribute to the ATP site. Positions 117–306 (RLAAEELGLP…EFALHVRAIL (190 aa)) constitute an ATP-grasp domain. Mg(2+) is bound by residues E265 and E277. N(1)-(5-phospho-beta-D-ribosyl)glycinamide-binding positions include D284, K355, and 362–363 (RR).

The protein belongs to the PurK/PurT family. Homodimer.

The enzyme catalyses N(1)-(5-phospho-beta-D-ribosyl)glycinamide + formate + ATP = N(2)-formyl-N(1)-(5-phospho-beta-D-ribosyl)glycinamide + ADP + phosphate + H(+). The protein operates within purine metabolism; IMP biosynthesis via de novo pathway; N(2)-formyl-N(1)-(5-phospho-D-ribosyl)glycinamide from N(1)-(5-phospho-D-ribosyl)glycinamide (formate route): step 1/1. In terms of biological role, involved in the de novo purine biosynthesis. Catalyzes the transfer of formate to 5-phospho-ribosyl-glycinamide (GAR), producing 5-phospho-ribosyl-N-formylglycinamide (FGAR). Formate is provided by PurU via hydrolysis of 10-formyl-tetrahydrofolate. This is Formate-dependent phosphoribosylglycinamide formyltransferase from Aeromonas salmonicida (strain A449).